We begin with the raw amino-acid sequence, 425 residues long: Serine--tRNA ligase (425 aa).

231 to 233 contributes to the L-serine binding site; it reads TAE. 262–264 serves as a coordination point for ATP; sequence RSE. E285 contributes to the L-serine binding site. 349 to 352 contacts ATP; the sequence is EISS. An L-serine-binding site is contributed by S385.

It belongs to the class-II aminoacyl-tRNA synthetase family. Type-1 seryl-tRNA synthetase subfamily. In terms of assembly, homodimer. The tRNA molecule binds across the dimer.

The protein resides in the cytoplasm. It carries out the reaction tRNA(Ser) + L-serine + ATP = L-seryl-tRNA(Ser) + AMP + diphosphate + H(+). The catalysed reaction is tRNA(Sec) + L-serine + ATP = L-seryl-tRNA(Sec) + AMP + diphosphate + H(+). It functions in the pathway aminoacyl-tRNA biosynthesis; selenocysteinyl-tRNA(Sec) biosynthesis; L-seryl-tRNA(Sec) from L-serine and tRNA(Sec): step 1/1. Its function is as follows. Catalyzes the attachment of serine to tRNA(Ser). Is also able to aminoacylate tRNA(Sec) with serine, to form the misacylated tRNA L-seryl-tRNA(Sec), which will be further converted into selenocysteinyl-tRNA(Sec). The protein is Serine--tRNA ligase of Halalkalibacterium halodurans (strain ATCC BAA-125 / DSM 18197 / FERM 7344 / JCM 9153 / C-125) (Bacillus halodurans).